Consider the following 307-residue polypeptide: MSEEKPTVRTEEDDRYEDDAGDLDLGQIGSRVWLVKIPKFLMDKWNSIPEDDAANLGCVRVKNDEIQLLLQNSPENADVPKIYNLRVMNKFVRNSYVFRESETSSSMKSTALVGTVAHECNVSPVINDDYRRVMQKRALAASAPKRKVQMIDDRGGSLLAPGTLGSRSRSTTSFIRNVKPRTGEGLKNSRIPRNELLDILFKCFEDYEYWTLKGLREYVKQPEVYLKEVLDSIAILNKRGPYALKYSLKPEYKGTMDAASVELRNQQASQSESSSIDHTGKNTSPDNPGTNAEEDEDDDGVEMIDVV.

Over residues M1–E12 the composition is skewed to basic and acidic residues. 2 disordered regions span residues M1–D22 and V261–V307. Over residues D13 to D22 the composition is skewed to acidic residues. The span at L263–T290 shows a compositional bias: polar residues. The segment covering A292 to V307 has biased composition (acidic residues).

Belongs to the TFIIF beta subunit family. In terms of assembly, component of the fcp1/TFIIF/polII complex via interaction of tfg3 with both tfg1/TFIIF-alpha and tfg2/TFIIF-beta subunits.

The protein resides in the nucleus. TFIIF is a general transcription initiation factor that binds to RNA polymerase II and helps to recruit it to the initiation complex in collaboration with TFIIB. It promotes transcription elongation. This is Transcription initiation factor IIF subunit beta (tfg2) from Schizosaccharomyces pombe (strain 972 / ATCC 24843) (Fission yeast).